A 163-amino-acid polypeptide reads, in one-letter code: Nucleotide-binding protein Dde_2479 (163 aa).

This sequence belongs to the YajQ family.

Functionally, nucleotide-binding protein. This chain is Nucleotide-binding protein Dde_2479, found in Oleidesulfovibrio alaskensis (strain ATCC BAA-1058 / DSM 17464 / G20) (Desulfovibrio alaskensis).